A 135-amino-acid polypeptide reads, in one-letter code: Small ribosomal subunit protein bS16m (135 aa).

A mitochondrion-targeting transit peptide spans 1 to 34 (MVQLTTVLCKAYRGGHLTIRLALGGCTNRPFYRI). Threonine 130 bears the Phosphothreonine mark.

The protein belongs to the bacterial ribosomal protein bS16 family. As to quaternary structure, component of the mitochondrial ribosome small subunit (28S) which comprises a 12S rRNA and about 30 distinct proteins.

The protein resides in the mitochondrion. This Bos taurus (Bovine) protein is Small ribosomal subunit protein bS16m (MRPS16).